A 290-amino-acid chain; its full sequence is 33 kDa chaperonin (290 aa).

Cystine bridges form between cysteine 235–cysteine 237 and cysteine 268–cysteine 271.

It belongs to the HSP33 family. In terms of processing, under oxidizing conditions two disulfide bonds are formed involving the reactive cysteines. Under reducing conditions zinc is bound to the reactive cysteines and the protein is inactive.

Its subcellular location is the cytoplasm. Redox regulated molecular chaperone. Protects both thermally unfolding and oxidatively damaged proteins from irreversible aggregation. Plays an important role in the bacterial defense system toward oxidative stress. The chain is 33 kDa chaperonin from Streptococcus pneumoniae (strain P1031).